Consider the following 1006-residue polypeptide: DNA polymerase (1006 aa).

Belongs to the DNA polymerase type-B family. In terms of assembly, interacts with OPG148. Component of the Uracil-DNA glycosylase(UDG)-OPG148-polymerase complex; OPG148 and OPG116/UDG form a heterodimeric processivity factor that associates with OPG071 to form the processive polymerase holoenzyme.

It catalyses the reaction DNA(n) + a 2'-deoxyribonucleoside 5'-triphosphate = DNA(n+1) + diphosphate. Its function is as follows. Catalyzes DNA synthesis. Acquires processivity by associating with a heterodimeric processivity factor comprised of the viral OPG148 and OPG116 proteins, thereby forming the DNA polymerase holoenzyme. Displays 3'- to 5' exonuclease activity. Might participate in viral DNA recombination. Does not perform OPG116/D4synthesis across an abasic site. The sequence is that of DNA polymerase (OPG071) from Homo sapiens (Human).